Here is a 148-residue protein sequence, read N- to C-terminus: Receptor activity-modifying protein 1 (148 aa).

The N-terminal stretch at 1-26 (MAPGLRGLPRRGLWLLLAHHLFMVTA) is a signal peptide. Disulfide bonds link Cys27–Cys82, Cys40–Cys72, and Cys57–Cys104. Over 27-118 (CRDPDYGTLI…RALRDPPNSI (92 aa)) the chain is Extracellular. Residues 119 to 140 (LCPFIVLPITVTLLMTALVVWR) form a helical membrane-spanning segment. Topologically, residues 141 to 148 (SKRTEGIV) are cytoplasmic.

The protein belongs to the RAMP family. In terms of assembly, heterodimer of CALCRL and RAMP1; the interaction induces allosteric modulation of CALCRL function and CGRP1/CALCA and CGRP2/CALCB ligand specificity. Heterodimer of CALCR and RAMP1; interaction forms the AMYR1 receptor complex for amylin/IAPP and CGRP1/CALCA ligands.

The protein resides in the cell membrane. In terms of biological role, accessory protein that interacts with and modulates the function of G-protein coupled receptors including calcitonin gene-related peptide type 1 receptor (CALCRL) and calcitonin receptor (CALCR). Required for the transport of CALCRL to the plasma membrane. Together with CALCRL, form the receptor complex for the calcitonin gene-related peptides CGRP1/CALCA and CGRP2/CALCB. Together with CALCR, form the AMYR1 receptor complex for amylin/IAPP and CGRP1/CALCA. The protein is Receptor activity-modifying protein 1 of Rattus norvegicus (Rat).